The chain runs to 124 residues: Small ribosomal subunit protein bS6 (124 aa).

This sequence belongs to the bacterial ribosomal protein bS6 family.

In terms of biological role, binds together with bS18 to 16S ribosomal RNA. The protein is Small ribosomal subunit protein bS6 of Chromobacterium violaceum (strain ATCC 12472 / DSM 30191 / JCM 1249 / CCUG 213 / NBRC 12614 / NCIMB 9131 / NCTC 9757 / MK).